The following is a 135-amino-acid chain: Protein Wnt-7a (135 aa).

2 disulfide bridges follow: cysteine 3/cysteine 17 and cysteine 5/cysteine 12. A lipid anchor (O-palmitoleoyl serine; by PORCN) is attached at serine 9. A disordered linker region spans residues 41–69 (VEPVRASRNKRPTFLKIKKPLSYRKPMDT). 4 disulfide bridges follow: cysteine 81–cysteine 112, cysteine 97–cysteine 107, cysteine 111–cysteine 134, and cysteine 130–cysteine 131. Asparagine 98 is a glycosylation site (N-linked (GlcNAc...) asparagine).

It belongs to the Wnt family. Palmitoleoylation is required for efficient binding to frizzled receptors. Depalmitoleoylation leads to Wnt signaling pathway inhibition. In embryo, in brain and ventral neural tube; in adults, in brain.

It localises to the secreted. The protein localises to the extracellular space. It is found in the extracellular matrix. Its function is as follows. Ligand for members of the frizzled family of seven transmembrane receptors that functions in the canonical Wnt/beta-catenin signaling pathway. Plays an important role in embryonic development, including dorsal versus ventral patterning during limb development, skeleton development and urogenital tract development. Required for central nervous system (CNS) angiogenesis and blood-brain barrier regulation. This is Protein Wnt-7a (wnt7a) from Xenopus laevis (African clawed frog).